The following is a 141-amino-acid chain: Endoribonuclease YbeY (141 aa).

The Zn(2+) site is built by H107, H111, and D117.

Belongs to the endoribonuclease YbeY family. It depends on Zn(2+) as a cofactor.

It is found in the cytoplasm. Single strand-specific metallo-endoribonuclease involved in late-stage 70S ribosome quality control and in maturation of the 3' terminus of the 16S rRNA. This is Endoribonuclease YbeY from Endomicrobium trichonymphae.